The primary structure comprises 568 residues: Estrogen receptor beta (568 aa).

Positions 1–177 (MHQQSPVDDV…SLRGKADMHY (177 aa)) are modulating. 2 NR C4-type zinc fingers span residues 178–198 (CAVC…CEGC) and 214–238 (CPAT…LRKC). A DNA-binding region (nuclear receptor) is located at residues 178–243 (CAVCSDYASG…RLRKCYEVGM (66 aa)). The NR LBD domain occupies 300 to 536 (TPEELIARIM…DLLLEMLDAH (237 aa)).

It belongs to the nuclear hormone receptor family. NR3 subfamily. Binds DNA as a homodimer. Can form a heterodimer with ER-alpha.

The protein localises to the nucleus. Functionally, binds estrogens with an affinity similar to that of ER-alpha, and activates expression of reporter genes containing estrogen response elements (ERE) in an estrogen-dependent manner. This chain is Estrogen receptor beta (esr2), found in Oncorhynchus mykiss (Rainbow trout).